The chain runs to 263 residues: 3-methyl-2-oxobutanoate hydroxymethyltransferase (263 aa).

2 residues coordinate Mg(2+): D45 and D84. 3-methyl-2-oxobutanoate-binding positions include 45–46 (DS), D84, and K112. Position 114 (E114) interacts with Mg(2+). E180 (proton acceptor) is an active-site residue.

Belongs to the PanB family. In terms of assembly, homodecamer; pentamer of dimers. Mg(2+) serves as cofactor.

The protein localises to the cytoplasm. The catalysed reaction is 3-methyl-2-oxobutanoate + (6R)-5,10-methylene-5,6,7,8-tetrahydrofolate + H2O = 2-dehydropantoate + (6S)-5,6,7,8-tetrahydrofolate. It participates in cofactor biosynthesis; (R)-pantothenate biosynthesis; (R)-pantoate from 3-methyl-2-oxobutanoate: step 1/2. In terms of biological role, catalyzes the reversible reaction in which hydroxymethyl group from 5,10-methylenetetrahydrofolate is transferred onto alpha-ketoisovalerate to form ketopantoate. This is 3-methyl-2-oxobutanoate hydroxymethyltransferase from Salmonella arizonae (strain ATCC BAA-731 / CDC346-86 / RSK2980).